Reading from the N-terminus, the 600-residue chain is Chaperone protein DnaK (600 aa).

Thr-175 carries the post-translational modification Phosphothreonine; by autocatalysis. Over residues 569 to 578 the composition is skewed to low complexity; the sequence is SFAQATAQQA. The tract at residues 569–600 is disordered; that stretch reads SFAQATAQQANTSESDPKADDSNTIDAEIKQD. The span at 583-600 shows a compositional bias: basic and acidic residues; sequence SDPKADDSNTIDAEIKQD.

This sequence belongs to the heat shock protein 70 family.

Acts as a chaperone. The polypeptide is Chaperone protein DnaK (Mesomycoplasma hyopneumoniae (strain J / ATCC 25934 / NCTC 10110) (Mycoplasma hyopneumoniae)).